Here is a 423-residue protein sequence, read N- to C-terminus: GTPase HflX (423 aa).

A Hflx-type G domain is found at 202 to 366 (PAAAIVGYTN…LLETILRNQK (165 aa)). Residues 208–215 (GYTNAGKS), 233–237 (FATLD), 255–258 (DTVG), 321–324 (NKID), and 344–346 (SAK) contribute to the GTP site. Residues Ser-215 and Thr-235 each contribute to the Mg(2+) site.

The protein belongs to the TRAFAC class OBG-HflX-like GTPase superfamily. HflX GTPase family. Monomer. Associates with the 50S ribosomal subunit. The cofactor is Mg(2+).

The protein localises to the cytoplasm. In terms of biological role, GTPase that associates with the 50S ribosomal subunit and may have a role during protein synthesis or ribosome biogenesis. This is GTPase HflX from Lacrimispora saccharolytica (strain ATCC 35040 / DSM 2544 / NRCC 2533 / WM1) (Clostridium saccharolyticum).